The primary structure comprises 87 residues: Small ribosomal subunit protein bS20 (87 aa).

Residues Met-1–Leu-24 are disordered.

It belongs to the bacterial ribosomal protein bS20 family.

In terms of biological role, binds directly to 16S ribosomal RNA. The chain is Small ribosomal subunit protein bS20 from Bordetella petrii (strain ATCC BAA-461 / DSM 12804 / CCUG 43448).